A 154-amino-acid chain; its full sequence is Putative nuclear shuttle protein (154 aa).

The protein belongs to the nanoviridae nuclear shuttle protein family.

Its subcellular location is the host nucleus. The protein resides in the host cytoplasm. Putative nuclear shuttle protein. The polypeptide is Putative nuclear shuttle protein (DNA-N) (Musa (BBTV)).